The sequence spans 196 residues: Holliday junction branch migration complex subunit RuvA (196 aa).

The tract at residues 1–63 (MIASVRGEVI…EDSMTLYGFA (63 aa)) is domain I. The tract at residues 64–142 (DADARDLFGT…PVTTGAGVTA (79 aa)) is domain II. A flexible linker region spans residues 143–151 (VGGHAVRGP). Positions 151–196 (PVVEALVGLGFAAKQAEEACDKVLAADPDATTSSALRAALSMLGKK) are domain III.

This sequence belongs to the RuvA family. As to quaternary structure, homotetramer. Forms an RuvA(8)-RuvB(12)-Holliday junction (HJ) complex. HJ DNA is sandwiched between 2 RuvA tetramers; dsDNA enters through RuvA and exits via RuvB. An RuvB hexamer assembles on each DNA strand where it exits the tetramer. Each RuvB hexamer is contacted by two RuvA subunits (via domain III) on 2 adjacent RuvB subunits; this complex drives branch migration. In the full resolvosome a probable DNA-RuvA(4)-RuvB(12)-RuvC(2) complex forms which resolves the HJ.

It localises to the cytoplasm. Functionally, the RuvA-RuvB-RuvC complex processes Holliday junction (HJ) DNA during genetic recombination and DNA repair, while the RuvA-RuvB complex plays an important role in the rescue of blocked DNA replication forks via replication fork reversal (RFR). RuvA specifically binds to HJ cruciform DNA, conferring on it an open structure. The RuvB hexamer acts as an ATP-dependent pump, pulling dsDNA into and through the RuvAB complex. HJ branch migration allows RuvC to scan DNA until it finds its consensus sequence, where it cleaves and resolves the cruciform DNA. The chain is Holliday junction branch migration complex subunit RuvA from Mycobacterium sp. (strain JLS).